Reading from the N-terminus, the 618-residue chain is UvrABC system protein C (618 aa).

Positions 20-98 (TAPGVYRMYA…IKSLSPRYNV (79 aa)) constitute a GIY-YIG domain. Residues 207–242 (DQLGEEIMHSMQQASEALEFERAARLRDLLSSLRSM) enclose the UVR domain.

It belongs to the UvrC family. In terms of assembly, interacts with UvrB in an incision complex.

The protein resides in the cytoplasm. Its function is as follows. The UvrABC repair system catalyzes the recognition and processing of DNA lesions. UvrC both incises the 5' and 3' sides of the lesion. The N-terminal half is responsible for the 3' incision and the C-terminal half is responsible for the 5' incision. The protein is UvrABC system protein C of Xanthomonas campestris pv. campestris (strain 8004).